Reading from the N-terminus, the 270-residue chain is Phosphatidate cytidylyltransferase (270 aa).

Transmembrane regions (helical) follow at residues 19-39 (LWLT…IGLA), 53-73 (TAFS…LLIL), 76-96 (GALL…VTQW), 101-121 (GWPA…SLLR), 126-146 (FGFT…ITAY), 183-203 (LVAS…ALLL), and 248-268 (ALLY…AIFF).

The protein belongs to the CDS family.

Its subcellular location is the cell inner membrane. It catalyses the reaction a 1,2-diacyl-sn-glycero-3-phosphate + CTP + H(+) = a CDP-1,2-diacyl-sn-glycerol + diphosphate. It functions in the pathway phospholipid metabolism; CDP-diacylglycerol biosynthesis; CDP-diacylglycerol from sn-glycerol 3-phosphate: step 3/3. The polypeptide is Phosphatidate cytidylyltransferase (cdsA) (Brucella abortus (strain 2308)).